A 518-amino-acid polypeptide reads, in one-letter code: MPVPSSAVFECLLSLAAIKDVDARPTRTIDEVFTGKPLTTIPVGTAEDVEAAFAEAREAQANWAKRPVSERAEVIRRYRDLVIENREFLMDLLQAEAGKARWAAQEEVVDLVANANYYARVSAGLLKPRTVQALLPGIGKTTVGYQPKGVVGVISPWNYPMTLTASDSVPALIAGNAVVLKPDSQTPYCALACAELLYRAGLPRALYAIVPGPGSVVGTAIADNCDYLMFTGSSATGSRLAERAGRRLIGFSAELGGKNAMIVTRGVNLDKVAKAATRACFSNAGQLCISIERIYVEKDIADEFTRKFGDAVRSMKLGTAYDFSVDMGSLISEGQLKTVSGHVDDATAKGAKVIAGGKARPDVGPLFYEPTVLTDVTHEMECADNETFGPLVSIYPVADVEEAVEKANDTEYGLNASVWAGSTPEGEKIAARLRSGTVNVNEGYAFAWGSLSAPMGGMGISGVGRRHGPEGLLKYTESQTIATARVFNLDPPMGVPPTLWQKSLLPIVRTVMKLPGRK.

NADP(+)-binding positions include 157–158 (WN), 181–184 (KPDS), and 232–233 (GS). The active-site Proton acceptor is E254. L255 is a binding site for NADP(+). The active-site Nucleophile is the C288. Residue E386 participates in NADP(+) binding.

Belongs to the aldehyde dehydrogenase family.

It carries out the reaction succinate semialdehyde + NADP(+) + H2O = succinate + NADPH + 2 H(+). Catalyzes the NADP(+)-dependent oxidation of succinate semialdehyde to succinate. Although it has succinate semialdehyde dehydrogenase activity, is likely to act physiologically on a different aldehyde(s). This chain is Putative succinate-semialdehyde dehydrogenase [NADP(+)] 2 (gabD2), found in Mycobacterium ulcerans (strain Agy99).